A 540-amino-acid chain; its full sequence is Probable ATP-dependent RNA helicase DDX28 (540 aa).

The Mitochondrial targeting signal motif lies at 3–18; it reads LTRPVRLFSLVTRLLL. The Q motif signature appears at 126–156; sequence GSFADLGLEPRVLHALQEAAPEVVQPTTVQS. One can recognise a Helicase ATP-binding domain in the interval 159 to 351; it reads IPSLLRGRHV…NKVASPDAVT (193 aa). 172–179 provides a ligand contact to ATP; that stretch reads AETGSGKT. The Nuclear export signal motif lies at 180–191; sequence LSYLLPLLQRLL. Residues 286–289 carry the DEAD motif; it reads DEAD. In terms of domain architecture, Helicase C-terminal spans 377-536; the sequence is KVAELVHILK…GLASSVKEPL (160 aa). The Nuclear localization signal motif lies at 520–523; the sequence is RRRR.

The protein belongs to the DEAD box helicase family. In terms of assembly, monomer. Found in a complex with GRSF1, DHX30, FASTKD2 and FASTKD5. Associates with the 16S mitochondrial rRNA (16S mt-rRNA) and with the mitochondrial ribosome large subunit (39S). Expressed in all tissues tested, including brain, placenta, lung, liver, skeletal muscle, kidney, pancreas, leukocytes, colon, small intestine, ovary and prostate.

It is found in the nucleus. It localises to the mitochondrion. Its subcellular location is the mitochondrion matrix. The protein resides in the mitochondrion nucleoid. The catalysed reaction is ATP + H2O = ADP + phosphate + H(+). Functionally, plays an essential role in facilitating the proper assembly of the mitochondrial large ribosomal subunit and its helicase activity is essential for this function. May be involved in RNA processing or transport. Has RNA and Mg(2+)-dependent ATPase activity. This is Probable ATP-dependent RNA helicase DDX28 (DDX28) from Homo sapiens (Human).